Reading from the N-terminus, the 258-residue chain is 5'-nucleotidase SurE (258 aa).

Residues Asp8, Asp9, Ser40, and Asn93 each contribute to the a divalent metal cation site.

The protein belongs to the SurE nucleotidase family. Requires a divalent metal cation as cofactor.

It localises to the cytoplasm. The enzyme catalyses a ribonucleoside 5'-phosphate + H2O = a ribonucleoside + phosphate. In terms of biological role, nucleotidase that shows phosphatase activity on nucleoside 5'-monophosphates. The chain is 5'-nucleotidase SurE from Afipia carboxidovorans (strain ATCC 49405 / DSM 1227 / KCTC 32145 / OM5) (Oligotropha carboxidovorans).